Consider the following 132-residue polypeptide: Small ribosomal subunit protein uS8c (132 aa).

This sequence belongs to the universal ribosomal protein uS8 family. In terms of assembly, part of the 30S ribosomal subunit.

Its subcellular location is the plastid. It is found in the chloroplast. In terms of biological role, one of the primary rRNA binding proteins, it binds directly to 16S rRNA central domain where it helps coordinate assembly of the platform of the 30S subunit. The protein is Small ribosomal subunit protein uS8c (rps8) of Marchantia polymorpha (Common liverwort).